The primary structure comprises 470 residues: ATP synthase subunit beta (470 aa).

151-158 is an ATP binding site; the sequence is GGAGVGKT.

This sequence belongs to the ATPase alpha/beta chains family. In terms of assembly, F-type ATPases have 2 components, CF(1) - the catalytic core - and CF(0) - the membrane proton channel. CF(1) has five subunits: alpha(3), beta(3), gamma(1), delta(1), epsilon(1). CF(0) has three main subunits: a(1), b(2) and c(9-12). The alpha and beta chains form an alternating ring which encloses part of the gamma chain. CF(1) is attached to CF(0) by a central stalk formed by the gamma and epsilon chains, while a peripheral stalk is formed by the delta and b chains.

The protein resides in the cell membrane. It catalyses the reaction ATP + H2O + 4 H(+)(in) = ADP + phosphate + 5 H(+)(out). Produces ATP from ADP in the presence of a proton gradient across the membrane. The catalytic sites are hosted primarily by the beta subunits. This chain is ATP synthase subunit beta, found in Mycoplasma mobile (strain ATCC 43663 / 163K / NCTC 11711) (Mesomycoplasma mobile).